We begin with the raw amino-acid sequence, 1124 residues long: Sodium/hydrogen exchanger 11 (1124 aa).

A run of 11 helical transmembrane segments spans residues 25–45 (LVEE…GGLL), 52–72 (CEVI…HMAY), 90–110 (FSLY…DVEF), 120–140 (VLLT…YVVI), 179–199 (IYID…SIFF), 224–244 (DILG…CILA), 254–274 (IILC…LGMS), 305–325 (IFSS…IGCG), 335–355 (IPFI…TILL), 372–392 (GVVI…APDV), and 405–425 (MFIL…SYVM). Asn447 and Asn473 each carry an N-linked (GlcNAc...) asparagine glycan. 4 helical membrane-spanning segments follow: residues 612–632 (TGQI…WPMA), 641–661 (ISIN…KIII), 674–694 (LEFF…FVKL), and 706–726 (VIMG…IVPI). The segment at 642–723 (SINYYFMFLY…IRFLPLFKII (82 aa)) is ion transport-like. 867-999 (IWLEGKDVLI…EYKIWLKLAL (133 aa)) contacts a nucleoside 3',5'-cyclic phosphate.

Belongs to the monovalent cation:proton antiporter 1 (CPA1) transporter (TC 2.A.36) family.

The protein resides in the membrane. Its function is as follows. Involved in pH regulation. The protein is Sodium/hydrogen exchanger 11 (SLC9C2) of Homo sapiens (Human).